The chain runs to 159 residues: NADH-quinone oxidoreductase subunit I (159 aa).

2 consecutive 4Fe-4S ferredoxin-type domains span residues 51–80 and 90–119; these read RRYE…IEAE and TRYD…EGPN. [4Fe-4S] cluster contacts are provided by C60, C63, C66, C70, C99, C102, C105, and C109.

This sequence belongs to the complex I 23 kDa subunit family. In terms of assembly, NDH-1 is composed of 14 different subunits. Subunits NuoA, H, J, K, L, M, N constitute the membrane sector of the complex. [4Fe-4S] cluster is required as a cofactor.

The protein resides in the cell inner membrane. It carries out the reaction a quinone + NADH + 5 H(+)(in) = a quinol + NAD(+) + 4 H(+)(out). NDH-1 shuttles electrons from NADH, via FMN and iron-sulfur (Fe-S) centers, to quinones in the respiratory chain. The immediate electron acceptor for the enzyme in this species is believed to be ubiquinone. Couples the redox reaction to proton translocation (for every two electrons transferred, four hydrogen ions are translocated across the cytoplasmic membrane), and thus conserves the redox energy in a proton gradient. In Rickettsia canadensis (strain McKiel), this protein is NADH-quinone oxidoreductase subunit I.